We begin with the raw amino-acid sequence, 219 residues long: Protein-L-isoaspartate O-methyltransferase 2 (219 aa).

Residue Ser-66 is part of the active site.

The protein belongs to the methyltransferase superfamily. L-isoaspartyl/D-aspartyl protein methyltransferase family.

It localises to the cytoplasm. It carries out the reaction [protein]-L-isoaspartate + S-adenosyl-L-methionine = [protein]-L-isoaspartate alpha-methyl ester + S-adenosyl-L-homocysteine. Its function is as follows. Catalyzes the methyl esterification of L-isoaspartyl residues in peptides and proteins that result from spontaneous decomposition of normal L-aspartyl and L-asparaginyl residues. It plays a role in the repair and/or degradation of damaged proteins. This Marinobacter nauticus (strain ATCC 700491 / DSM 11845 / VT8) (Marinobacter aquaeolei) protein is Protein-L-isoaspartate O-methyltransferase 2.